A 663-amino-acid chain; its full sequence is Heparan-alpha-glucosaminide N-acetyltransferase (663 aa).

The tract at residues 1–24 (MTGARASAAEQRRAGRSGQARAAE) is disordered. The Lumenal, vesicle portion of the chain corresponds to 1 to 190 (MTGARASAAE…LAVNEDPVDS (190 aa)). N-linked (GlcNAc...) asparagine glycans are attached at residues N94, N142, and N162. C151 and C462 are disulfide-bonded. Residues 191 to 211 (NLPVSIAFLIGLAVIIVISFL) form a helical membrane-spanning segment. The Cytoplasmic segment spans residues 212–275 (RLLLSLDDFN…PRLRSVDTFR (64 aa)). Residues S243 and S245 each carry the phosphoserine modification. A helical transmembrane segment spans residues 276–296 (GIALILMVFVNYGGGKYWYFK). Residue H297 is part of the active site. Topologically, residues 297–302 (HASWNG) are lumenal, vesicle. Residues 303-323 (LTVADLVFPWFVFIMGSSIFL) form a helical membrane-spanning segment. The Cytoplasmic portion of the chain corresponds to 324–345 (SMTSILQRGCSKFRLLGKIAWR). A helical transmembrane segment spans residues 346–366 (SFLLICIGIIIVNPNYCLGPL). At 367-374 (SWDKVRIP) the chain is on the lumenal, vesicle side. Residues 375–395 (GVLQRLGVTYFVVAVLELLFA) form a helical membrane-spanning segment. The Cytoplasmic portion of the chain corresponds to 396-420 (KPVPEHCASERSCLSLRDITSSWPQ). A helical transmembrane segment spans residues 421–441 (WLLILVLEGLWLGLTFLLPVP). At 442-500 (GCPTGYLGPGGIGDFGKYPNCTGGAAGYIDRLLLGDDHLYQHPSSAVLYHTEVAYDPEG) the chain is on the lumenal, vesicle side. A helical membrane pass occupies residues 501–521 (ILGTINSIVMAFLGVQAGKIL). The Cytoplasmic segment spans residues 522-529 (LYYKARTK). A helical membrane pass occupies residues 530–550 (DILIRFTAWCCILGLISVALT). Residues 551–564 (KVSENEGFIPVNKN) are Lumenal, vesicle-facing. A helical membrane pass occupies residues 565 to 585 (LWSLSYVTTLSSFAFFILLVL). At 586-592 (YPVVDVK) the chain is on the cytoplasmic side. A helical membrane pass occupies residues 593–613 (GLWTGTPFFYPGMNSILVYVG). The Lumenal, vesicle portion of the chain corresponds to 614-634 (HEVFENYFPFQWKLKDNQSHK). Positions 624-635 (QWKLKDNQSHKE) are lysosomal targeting region. A helical membrane pass occupies residues 635 to 655 (EHLTQNIVATALWVLIAYILY). The Cytoplasmic segment spans residues 656–663 (RKKIFWKI).

As to quaternary structure, homooligomer. Homooligomerization is necessary for enzyme activity. Undergoes intralysosomal proteolytic cleavage; occurs within the end of the first and/or the beginning of the second luminal domain and is essential for the activation of the enzyme. Post-translationally, glycosylated. Widely expressed, with highest level in leukocytes, heart, liver, skeletal muscle, lung, placenta and liver.

The protein resides in the lysosome membrane. The enzyme catalyses alpha-D-glucosaminyl-[heparan sulfate](n) + acetyl-CoA = N-acetyl-alpha-D-glucosaminyl-[heparan sulfate](n) + CoA + H(+). Its function is as follows. Lysosomal acetyltransferase that acetylates the non-reducing terminal alpha-glucosamine residue of intralysosomal heparin or heparan sulfate, converting it into a substrate for luminal alpha-N-acetyl glucosaminidase. This is Heparan-alpha-glucosaminide N-acetyltransferase (HGSNAT) from Homo sapiens (Human).